Here is a 230-residue protein sequence, read N- to C-terminus: Prolactin-6A1 (230 aa).

The first 29 residues, 1–29 (MLSLSQPCFSGTLLMLLASNFLLWKNVAP), serve as a signal peptide directing secretion. The N-linked (GlcNAc...) asparagine glycan is linked to asparagine 57. 2 disulfides stabilise this stretch: cysteine 89–cysteine 205 and cysteine 222–cysteine 230.

The protein belongs to the somatotropin/prolactin family. As to expression, expressed in both placenta and decidual tissues. Detected first in deciduals cells early in gestation and in trophoblasts later in pregnancy.

Its subcellular location is the secreted. This chain is Prolactin-6A1 (Prl6a1), found in Mus musculus (Mouse).